A 741-amino-acid chain; its full sequence is Zinc finger protein 425 (741 aa).

Residues 1–69 (DDVALYFSGQ…EQGCLDKTRR (69 aa)) enclose the KRAB domain. 2 disordered regions span residues 67-86 (TRRT…DTGK) and 128-169 (RRDT…TPGR). The span at 132 to 151 (FQSPSLQETEIPNKKVSITA) shows a compositional bias: polar residues. The segment covering 153–168 (DPDKKDLRHKPRETPG) has biased composition (basic and acidic residues). 19 C2H2-type zinc fingers span residues 179–201 (YSCY…KRSH), 235–257 (FQCS…QVVH), 263–285 (YPCP…LCLH), 291–313 (FCCG…LRLH), 319–341 (FQCP…LSQH), 347–369 (FHCP…QRTH), 375–397 (FSCD…IRVH), 403–425 (FSCP…GLQH), 431–453 (FQCP…QRLH), 459–481 (FPCA…TRVH), 487–509 (FPCG…LKVH), 515–537 (FSCA…TRLH), 543–565 (FQCP…QRMH), 571–593 (FACS…LRLH), 599–621 (YQCP…LLQH), 627–649 (FSCV…IRVH), 655–677 (FQCP…LYTH), 683–705 (FQCP…LCLH), and 711–733 (FSCD…IAVH).

This sequence belongs to the krueppel C2H2-type zinc-finger protein family.

It localises to the nucleus. The protein localises to the cytoplasm. Its function is as follows. Acts as a transcriptional repressor. This chain is Zinc finger protein 425 (ZNF425), found in Macaca fascicularis (Crab-eating macaque).